A 642-amino-acid chain; its full sequence is Threonine--tRNA ligase (642 aa).

Residues 1–61 (MPVITLPDGS…ENDAQLSIIT (61 aa)) enclose the TGS domain. The catalytic stretch occupies residues 243–534 (DHRKIGKQLD…LTEEFAGFFP (292 aa)). Position 286 is an N6-acetyllysine (K286). Residues C334, H385, and H511 each coordinate Zn(2+).

The protein belongs to the class-II aminoacyl-tRNA synthetase family. As to quaternary structure, homodimer. The cofactor is Zn(2+).

The protein localises to the cytoplasm. It carries out the reaction tRNA(Thr) + L-threonine + ATP = L-threonyl-tRNA(Thr) + AMP + diphosphate + H(+). Its function is as follows. Catalyzes the attachment of threonine to tRNA(Thr) in a two-step reaction: L-threonine is first activated by ATP to form Thr-AMP and then transferred to the acceptor end of tRNA(Thr). Also edits incorrectly charged L-seryl-tRNA(Thr). The protein is Threonine--tRNA ligase of Escherichia coli O9:H4 (strain HS).